The chain runs to 951 residues: Valine--tRNA ligase (951 aa).

Positions Pro-42–His-52 match the 'HIGH' region motif. Residues Lys-554–Ser-558 carry the 'KMSKS' region motif. ATP is bound at residue Lys-557. Residues Ala-880–Gln-944 adopt a coiled-coil conformation.

This sequence belongs to the class-I aminoacyl-tRNA synthetase family. ValS type 1 subfamily. As to quaternary structure, monomer.

The protein resides in the cytoplasm. The enzyme catalyses tRNA(Val) + L-valine + ATP = L-valyl-tRNA(Val) + AMP + diphosphate. Catalyzes the attachment of valine to tRNA(Val). As ValRS can inadvertently accommodate and process structurally similar amino acids such as threonine, to avoid such errors, it has a 'posttransfer' editing activity that hydrolyzes mischarged Thr-tRNA(Val) in a tRNA-dependent manner. This Shigella boydii serotype 4 (strain Sb227) protein is Valine--tRNA ligase.